Here is a 398-residue protein sequence, read N- to C-terminus: Acetate kinase (398 aa).

Mg(2+) is bound at residue Asn10. Lys17 is a binding site for ATP. Residue Arg91 participates in substrate binding. Asp148 (proton donor/acceptor) is an active-site residue. ATP-binding positions include 208–212 (HLGNG), 283–285 (DCR), and 331–335 (GIGEN). Glu385 contributes to the Mg(2+) binding site.

It belongs to the acetokinase family. As to quaternary structure, homodimer. It depends on Mg(2+) as a cofactor. The cofactor is Mn(2+).

Its subcellular location is the cytoplasm. The enzyme catalyses acetate + ATP = acetyl phosphate + ADP. Its pathway is metabolic intermediate biosynthesis; acetyl-CoA biosynthesis; acetyl-CoA from acetate: step 1/2. Functionally, catalyzes the formation of acetyl phosphate from acetate and ATP. Can also catalyze the reverse reaction. The sequence is that of Acetate kinase from Shewanella pealeana (strain ATCC 700345 / ANG-SQ1).